A 396-amino-acid chain; its full sequence is Enoyl-[acyl-carrier-protein] reductase [NADH] (396 aa).

Residues 47–52 (GASTGF), 73–74 (FE), 110–111 (DA), and 138–139 (LA) each bind NAD(+). Y224 contacts substrate. The active-site Proton donor is Y234. Residues K243 and 272 to 274 (LVT) each bind NAD(+).

This sequence belongs to the TER reductase family. As to quaternary structure, monomer.

It catalyses the reaction a 2,3-saturated acyl-[ACP] + NAD(+) = a (2E)-enoyl-[ACP] + NADH + H(+). It functions in the pathway lipid metabolism; fatty acid biosynthesis. Functionally, involved in the final reduction of the elongation cycle of fatty acid synthesis (FAS II). Catalyzes the reduction of a carbon-carbon double bond in an enoyl moiety that is covalently linked to an acyl carrier protein (ACP). The chain is Enoyl-[acyl-carrier-protein] reductase [NADH] from Flavobacterium johnsoniae (strain ATCC 17061 / DSM 2064 / JCM 8514 / BCRC 14874 / CCUG 350202 / NBRC 14942 / NCIMB 11054 / UW101) (Cytophaga johnsonae).